The following is a 391-amino-acid chain: 3-ketoacyl-CoA thiolase (391 aa).

Cys-95 (acyl-thioester intermediate) is an active-site residue. Active-site proton acceptor residues include His-347 and Cys-377.

It belongs to the thiolase-like superfamily. Thiolase family. As to quaternary structure, heterotetramer of two alpha chains (FadB) and two beta chains (FadA).

The protein resides in the cytoplasm. The enzyme catalyses an acyl-CoA + acetyl-CoA = a 3-oxoacyl-CoA + CoA. Its pathway is lipid metabolism; fatty acid beta-oxidation. Functionally, catalyzes the final step of fatty acid oxidation in which acetyl-CoA is released and the CoA ester of a fatty acid two carbons shorter is formed. The polypeptide is 3-ketoacyl-CoA thiolase (Pseudomonas syringae pv. tomato (strain ATCC BAA-871 / DC3000)).